The chain runs to 89 residues: Signal recognition particle 19 kDa protein (89 aa).

Belongs to the SRP19 family. Part of the signal recognition particle protein translocation system, which is composed of SRP and FtsY. Archaeal SRP consists of a 7S RNA molecule of 300 nucleotides and two protein subunits: SRP54 and SRP19.

The protein resides in the cytoplasm. Functionally, involved in targeting and insertion of nascent membrane proteins into the cytoplasmic membrane. Binds directly to 7S RNA and mediates binding of the 54 kDa subunit of the SRP. The protein is Signal recognition particle 19 kDa protein of Methanococcus vannielii (strain ATCC 35089 / DSM 1224 / JCM 13029 / OCM 148 / SB).